Consider the following 572-residue polypeptide: Probable terpene synthase 11 (572 aa).

Mg(2+)-binding residues include Asp-317, Asp-321, and Glu-469. The DDXXD motif motif lies at 317–321 (DDIFD).

It belongs to the terpene synthase family. Requires Mg(2+) as cofactor.

Functionally, probable sesquiterpene synthase. This chain is Probable terpene synthase 11 (TPS11), found in Ricinus communis (Castor bean).